The sequence spans 120 residues: Small ribosomal subunit protein uS13 (120 aa).

The tract at residues 94-120 (GLPLRGQRTRTNARTRKGPRKAIAGKK) is disordered.

The protein belongs to the universal ribosomal protein uS13 family. Part of the 30S ribosomal subunit. Forms a loose heterodimer with protein S19. Forms two bridges to the 50S subunit in the 70S ribosome.

In terms of biological role, located at the top of the head of the 30S subunit, it contacts several helices of the 16S rRNA. In the 70S ribosome it contacts the 23S rRNA (bridge B1a) and protein L5 of the 50S subunit (bridge B1b), connecting the 2 subunits; these bridges are implicated in subunit movement. Contacts the tRNAs in the A and P-sites. The sequence is that of Small ribosomal subunit protein uS13 from Aromatoleum aromaticum (strain DSM 19018 / LMG 30748 / EbN1) (Azoarcus sp. (strain EbN1)).